Reading from the N-terminus, the 500-residue chain is MQTSSSGYILALDLGTTGNRAFIFNNAGKIVAQAYKELTQHYPQPGWLEHDAEEIWQDTCWVMKTAIANAQISPSEIAAIGLTVQRETCLLWDKTTGKPLHKAIVWQDRRTAPLCHQLQEKGYAQEIYSRTGLVVDAYFSATKLRWLLDYITGVDLKNVLAGTIDTWILWKLTGGKVHATDHSNASRTMLMNLKTGEWDEQLLEILQIPAHILPQIQPSLGKFGLTDTSLLDTAIPITAILGDQQAALFGHGCDRPGLMKCTYGTGSFLVAHTGSNIVRSQHQLISTIAWTQYNSQENINIGYALEGSMFTSGACIQWLRDGIKLIKTAAETETMANQVDDNGGVYFVPAFSGLGAPYWDMNARGAFFGITASVQPQHLVRAVLEAIAYQVLEVVQAINASCSSPMQRLIVDGGACENNFLMQFQADVLGIPVERPTMRDTTVQGAAFAAGLAVGFWDSYTALVNQRQIDRIFEPGEGSQNAIYNFATWQKAVKRSLDWV.

Threonine 16 lines the ADP pocket. Residues threonine 16 and threonine 17 each contribute to the ATP site. A sn-glycerol 3-phosphate-binding site is contributed by threonine 16. Residue arginine 20 coordinates ADP. The sn-glycerol 3-phosphate site is built by arginine 86, glutamate 87, tyrosine 138, and aspartate 243. Positions 86, 87, 138, 243, and 244 each coordinate glycerol. The ADP site is built by threonine 265 and glycine 313. Residues threonine 265, glycine 313, glutamine 317, and glycine 414 each contribute to the ATP site. ADP is bound by residues glycine 414 and asparagine 418.

This sequence belongs to the FGGY kinase family.

The catalysed reaction is glycerol + ATP = sn-glycerol 3-phosphate + ADP + H(+). The protein operates within polyol metabolism; glycerol degradation via glycerol kinase pathway; sn-glycerol 3-phosphate from glycerol: step 1/1. Its activity is regulated as follows. Inhibited by fructose 1,6-bisphosphate (FBP). In terms of biological role, key enzyme in the regulation of glycerol uptake and metabolism. Catalyzes the phosphorylation of glycerol to yield sn-glycerol 3-phosphate. In Trichormus variabilis (strain ATCC 29413 / PCC 7937) (Anabaena variabilis), this protein is Glycerol kinase.